The following is a 312-amino-acid chain: Carbonic anhydrase 4 (312 aa).

Residues 1–18 form the signal peptide; that stretch reads MRLLLALLVLAAAPPQAR. Positions 21-285 constitute an Alpha-carbonic anhydrase domain; the sequence is SHWCYQIQVK…LGQRQVFRSG (265 aa). Disulfide bonds link Cys-24–Cys-36 and Cys-46–Cys-229. Asn-33 is a glycosylation site (N-linked (GlcNAc...) asparagine). The active-site Proton donor/acceptor is His-88. Positions 115, 117, and 140 each coordinate Zn(2+). Asn-152 and Asn-195 each carry an N-linked (GlcNAc...) asparagine glycan. 225-226 serves as a coordination point for substrate; the sequence is TT. N-linked (GlcNAc...) asparagine glycosylation is present at Asn-265. The GPI-anchor amidated serine moiety is linked to residue Ser-284. Residues 285-312 constitute a propeptide, removed in mature form; that stretch reads GAPGLLLAQPLPTLLAPVLACLTVGFLR.

Belongs to the alpha-carbonic anhydrase family. Interacts with SLC4A4. Zn(2+) serves as cofactor.

It is found in the cell membrane. The catalysed reaction is hydrogencarbonate + H(+) = CO2 + H2O. With respect to regulation, inhibited by acetazolamide. Catalyzes the reversible hydration of carbon dioxide into bicarbonate and protons and thus is essential to maintaining intracellular and extracellular pH. May stimulate the sodium/bicarbonate transporter activity of SLC4A4 that acts in pH homeostasis. It is essential for acid overload removal from the retina and retina epithelium, and acid release in the choriocapillaris in the choroid. The polypeptide is Carbonic anhydrase 4 (CA4) (Bos taurus (Bovine)).